The chain runs to 950 residues: Coatomer subunit beta-2 (950 aa).

HEAT repeat units lie at residues 92–126, 127–164, 275–312, 313–350, and 392–429; these read PEMI…LSEP, EVLE…LPHG, TAVR…TSHR, DVMV…ARNV, and EVAG…TNPK.

As to quaternary structure, oligomeric complex that consists of at least the alpha, beta, beta', gamma, delta, epsilon and zeta subunits.

It is found in the cytoplasm. Its subcellular location is the golgi apparatus membrane. The protein localises to the cytoplasmic vesicle. It localises to the COPI-coated vesicle membrane. Its function is as follows. The coatomer is a cytosolic protein complex that binds to dilysine motifs and reversibly associates with Golgi non-clathrin-coated vesicles, which further mediate biosynthetic protein transport from the ER, via the Golgi up to the trans Golgi network. Coatomer complex is required for budding from Golgi membranes, and is essential for the retrograde Golgi-to-ER transport of dilysine-tagged proteins. In Oryza sativa subsp. japonica (Rice), this protein is Coatomer subunit beta-2.